A 500-amino-acid chain; its full sequence is Protein DETOXIFICATION 24 (500 aa).

The tract at residues 1–20 (MSTQEEMEERLLREGSDAEG) is disordered. A run of 12 helical transmembrane segments spans residues 48-67 (SSLFRMTSFGSIIVAQAFIG), 72-92 (LGLAAYALLQSTFIRFLYGLM), 124-144 (IVDMAVTTLFLPFIVLAGPIL), 160-180 (IYPWMIPYVYSLIFTMTIQMY), 188-208 (AIVGVLSTLSLALDLVVTWWC), 225-245 (VGSWAMVLAEFVYIFGGWCPF), 266-286 (ISSGFMICLEYWYMSILVLMA), 298-318 (AFSICQYIYTWELNICLGFLG), 342-362 (VILTISTLMGVIFSALCLAFC), 384-404 (VILAVSILLNSIQPILSGVAV), 411-431 (IVAVVNLASYYAIGIPLGLIL), and 441-461 (GLWSGMLAGIAIQTIILCYII).

This sequence belongs to the multi antimicrobial extrusion (MATE) (TC 2.A.66.1) family.

Its subcellular location is the membrane. This is Protein DETOXIFICATION 24 from Arabidopsis thaliana (Mouse-ear cress).